The primary structure comprises 77 residues: Translation initiation factor IF-1, chloroplastic (77 aa).

Residues 1-71 (MKEQKLIHEG…TRGRIIYRLR (71 aa)) form the S1-like domain.

It belongs to the IF-1 family. Component of the 30S ribosomal translation pre-initiation complex which assembles on the 30S ribosome in the order IF-2 and IF-3, IF-1 and N-formylmethionyl-tRNA(fMet); mRNA recruitment can occur at any time during PIC assembly.

It is found in the plastid. The protein localises to the chloroplast. Its function is as follows. One of the essential components for the initiation of protein synthesis. Stabilizes the binding of IF-2 and IF-3 on the 30S subunit to which N-formylmethionyl-tRNA(fMet) subsequently binds. Helps modulate mRNA selection, yielding the 30S pre-initiation complex (PIC). Upon addition of the 50S ribosomal subunit IF-1, IF-2 and IF-3 are released leaving the mature 70S translation initiation complex. This Liriodendron tulipifera (Tuliptree) protein is Translation initiation factor IF-1, chloroplastic.